A 265-amino-acid polypeptide reads, in one-letter code: Histidine racemase (265 aa).

The active-site Proton acceptor is Cys67. Residue Cys209 is the Proton donor of the active site.

The protein belongs to the histidine racemase family. Homodimer.

It carries out the reaction L-histidine = D-histidine. Its activity is regulated as follows. Activity is not affected by buffer composition (PO(4) or Tris), ions (SO(4)(2-), Mg(2+) and EDTA) or the PLP inhibitor hydroxylamine. However, the activity is hindered by iodoacetamide and Hg(2+), which are known inhibitors of enzymes with catalytic thiols. Cofactor-independent isomerase that catalyzes the reversible conversion of L-histidine to D-histidine. Shows weak activity with L,L-lanthionine. The catalytic turnover is 10'000-fold faster with L-histidine than with L,L-lanthionine. May play a role in growth of F.nucleatum. The protein is Histidine racemase of Fusobacterium nucleatum subsp. nucleatum (strain ATCC 25586 / DSM 15643 / BCRC 10681 / CIP 101130 / JCM 8532 / KCTC 2640 / LMG 13131 / VPI 4355).